The following is a 194-amino-acid chain: uncharacterized protein (194 aa).

The signal sequence occupies residues 1-22 (MNKVTKTAIAGLLALFAGNAAA). Cysteines 38 and 78 form a disulfide.

It belongs to the fimbrial protein family.

It localises to the fimbrium. Its function is as follows. Part of the yraHIJK fimbrial operon. Could contribute to adhesion to various surfaces in specific environmental niches. Increases adhesion to eukaryotic T24 bladder epithelial cells in the absence of fim operon. This is an uncharacterized protein from Escherichia coli (strain K12).